A 94-amino-acid polypeptide reads, in one-letter code: Co-chaperonin GroES (94 aa).

The protein belongs to the GroES chaperonin family. In terms of assembly, heptamer of 7 subunits arranged in a ring. Interacts with the chaperonin GroEL.

The protein resides in the cytoplasm. Together with the chaperonin GroEL, plays an essential role in assisting protein folding. The GroEL-GroES system forms a nano-cage that allows encapsulation of the non-native substrate proteins and provides a physical environment optimized to promote and accelerate protein folding. GroES binds to the apical surface of the GroEL ring, thereby capping the opening of the GroEL channel. In Clostridium botulinum (strain Eklund 17B / Type B), this protein is Co-chaperonin GroES.